The following is a 505-amino-acid chain: 2,3-bisphosphoglycerate-independent phosphoglycerate mutase (505 aa).

Mn(2+) is bound by residues Asp-13 and Ser-63. The active-site Phosphoserine intermediate is Ser-63. Substrate contacts are provided by residues His-124, 153–154, Arg-183, Arg-189, 254–257, and Lys-330; these read RD and RADR. Residues Asp-396, His-400, Asp-437, His-438, and His-456 each contribute to the Mn(2+) site.

It belongs to the BPG-independent phosphoglycerate mutase family. In terms of assembly, monomer. Mn(2+) serves as cofactor.

It carries out the reaction (2R)-2-phosphoglycerate = (2R)-3-phosphoglycerate. It participates in carbohydrate degradation; glycolysis; pyruvate from D-glyceraldehyde 3-phosphate: step 3/5. Catalyzes the interconversion of 2-phosphoglycerate and 3-phosphoglycerate. In Dinoroseobacter shibae (strain DSM 16493 / NCIMB 14021 / DFL 12), this protein is 2,3-bisphosphoglycerate-independent phosphoglycerate mutase.